The primary structure comprises 214 residues: MAGPAAHFSDEQFREACAELQKPALTGADWQLLVEASGITIYRLLDQSTGLYEYKVFGVLESCIPSLLADVYMDLDYRKKWDQYVKELYEKSFDGQMVAYWEVKYPFPLSNRDYVYTRQRRDLDVDGRKIYVVLAQNISVPQFPEKSGVIRVKQYKQSLAIESDGKKGSRVFMYYFDNPGGQIPSWLINWAAKNGVPSFLKDMVKACQNYHKKT.

The residue at position 1 (Met-1) is an N-acetylmethionine. Residues 1–212 form the START domain; sequence MAGPAAHFSD…MVKACQNYHK (212 aa). Tyr-72 and Arg-78 together coordinate a 1,2-diacyl-sn-glycero-3-phosphocholine. Residue Ser-139 is modified to Phosphoserine. Gln-157 lines the a 1,2-diacyl-sn-glycero-3-phosphocholine pocket.

In terms of assembly, interacts with ACOT13/THEM2.

The protein localises to the cytoplasm. Functionally, lipid transfer protein that promotes intermembrane transfer of phosphatidylcholines but no other phospholipids. Binds a single lipid molecule. May play a role in hepatocellular selection and transport of phosphatidylcholines during bile formation. This is Phosphatidylcholine transfer protein (Pctp) from Rattus norvegicus (Rat).